A 171-amino-acid polypeptide reads, in one-letter code: Superoxide dismutase [Cu-Zn] 2 (171 aa).

The signal sequence occupies residues 1-20 (MKKLSGVLAGSLLLISASFS). Cu cation is bound by residues H67, H69, and H85. C74 and C167 are disulfide-bonded. Zn(2+)-binding residues include H85, H93, H102, and D105. Cu cation is bound at residue H147.

It belongs to the Cu-Zn superoxide dismutase family. Cu cation is required as a cofactor. Requires Zn(2+) as cofactor.

It catalyses the reaction 2 superoxide + 2 H(+) = H2O2 + O2. Functionally, destroys radicals which are normally produced within the cells and which are toxic to biological systems. This is Superoxide dismutase [Cu-Zn] 2 (sodC2) from Aquifex aeolicus (strain VF5).